A 316-amino-acid chain; its full sequence is MLSLSNLQNIIYNPTIPYVSTITEQLKPGSLIVIRGHVPKDSERFQVDFQHGNSLKPRADVAFHFNPRFKRSNCIVCNTLTNEKWGWEEITHDMPFRKEKSFEIVIMVLKNKFHVAVNGKHILLYAHRINPEKIDTLGIFGKVNIHSIGFRFSSDLQSMETSTLGLTQISKENIQKSGKLHLSLPFEARLNASMGPGRTVVVKGEVNTNATSFNVDLVAGRSRDIALHLNPRLNVKAFVRNSFLQDAWGEEERNITCFPFSSGMYFEMIIYCDVREFKVAVNGVHSLEYKHRFKDLSSIDTLAVDGDIRLLDVRSW.

2 Galectin domains span residues 18–151 and 186–316; these read YVST…IGFR and FEAR…VRSW. 3 residues coordinate a carbohydrate: Arg-68, Asn-78, and Glu-88. Residue 248-254 coordinates a beta-D-galactoside; it reads WGEEERN.

Homodimer. Interacts with CALCOCO2/NDP52. Interacts with PDPN; the interaction is glycosylation-dependent; may participate in connection of the lymphatic endothelium to the surrounding extracellular matrix. Expressed in liver, kidney, cardiac muscle, lung, and brain.

It is found in the cytoplasmic vesicle. Its subcellular location is the cytoplasm. The protein resides in the cytosol. Beta-galactoside-binding lectin that acts as a sensor of membrane damage caused by infection and restricts the proliferation of infecting pathogens by targeting them for autophagy. Detects membrane rupture by binding beta-galactoside ligands located on the lumenal side of the endosome membrane; these ligands becoming exposed to the cytoplasm following rupture. Restricts infection by initiating autophagy via interaction with CALCOCO2/NDP52. Required to restrict infection of bacterial invasion such as S.typhimurium. Also required to restrict infection of Picornaviridae viruses. Has a marked preference for 3'-O-sialylated and 3'-O-sulfated glycans. This chain is Galectin-8 (Lgals8), found in Rattus norvegicus (Rat).